A 328-amino-acid polypeptide reads, in one-letter code: P2Y purinoceptor 3 (328 aa).

Over 1–22 (MSMANFTGGRNSCTFHEEFKQV) the chain is Extracellular. Asparagine 5 carries N-linked (GlcNAc...) asparagine glycosylation. A helical transmembrane segment spans residues 23–43 (LLPLVYSVVFLLGLPLNAVVI). The Cytoplasmic portion of the chain corresponds to 44–57 (GQIWLARKALTRTT). Residues 58-78 (IYMLNLAMADLLYVCSLPLLI) traverse the membrane as a helical segment. Topologically, residues 79–96 (YNYTQKDYWPFGDFTCKF) are extracellular. A disulfide bridge connects residues cysteine 94 and cysteine 172. The helical transmembrane segment at 97-117 (VRFQFYTNLHGSILFLTCISV) threads the bilayer. The Cytoplasmic portion of the chain corresponds to 118–139 (QRYMGICHPLASWHKKKGKKLT). Residues 140–160 (WLVCAAVWFIVIAQCLPTFVF) form a helical membrane-spanning segment. The Extracellular segment spans residues 161-189 (ASTGTQRNRTVCYDLSPPDRSTSYFPYGI). A helical transmembrane segment spans residues 190 to 210 (TLTITGFLLPFAAILACYCSM). The Cytoplasmic portion of the chain corresponds to 211–231 (ARILCQKDELIGLAVHKKKDK). A helical membrane pass occupies residues 232–252 (AVRMIIIVVIVFSISFFPFHL). The Extracellular portion of the chain corresponds to 253–275 (TKTIYLIVRSSASLPCPTLQAFA). A helical transmembrane segment spans residues 276-298 (IAYKCTRPFASMNSVLDPILFYF). At 299-323 (TQRKFRESTRYLLDKMSSKWRQDHC) the chain is on the cytoplasmic side.

Belongs to the G-protein coupled receptor 1 family.

Its subcellular location is the cell membrane. In terms of biological role, receptor for extracellular ADP &gt; UTP &gt; ATP = UDP. The activity of this receptor is mediated by G proteins which activate a phosphatidylinositol-calcium second messenger system. This Gallus gallus (Chicken) protein is P2Y purinoceptor 3 (P2RY3).